Consider the following 341-residue polypeptide: Mediator of RNA polymerase II transcription subunit 18 (341 aa).

Positions 139-216 (KVMDKEKVQS…KEHSEGNASQ (78 aa)) are disordered. Basic and acidic residues predominate over residues 163-211 (EDKKENIKKEESGEEVKGSGEEVKGSGEEVKGSGEEAKKSGEEAKEHSE).

Belongs to the Mediator complex subunit 18 family. Component of the Mediator complex.

It localises to the nucleus. Functionally, component of the Mediator complex, a coactivator involved in the regulated transcription of nearly all RNA polymerase II-dependent genes. Mediator functions as a bridge to convey information from gene-specific regulatory proteins to the basal RNA polymerase II transcription machinery. Mediator is recruited to promoters by direct interactions with regulatory proteins and serves as a scaffold for the assembly of a functional preinitiation complex with RNA polymerase II and the general transcription factors. This Debaryomyces hansenii (strain ATCC 36239 / CBS 767 / BCRC 21394 / JCM 1990 / NBRC 0083 / IGC 2968) (Yeast) protein is Mediator of RNA polymerase II transcription subunit 18 (SRB5).